Consider the following 156-residue polypeptide: Ribosome maturation factor RimP (156 aa).

It belongs to the RimP family.

The protein localises to the cytoplasm. Its function is as follows. Required for maturation of 30S ribosomal subunits. The chain is Ribosome maturation factor RimP from Bacillus mycoides (strain KBAB4) (Bacillus weihenstephanensis).